The sequence spans 100 residues: U12-ctenitoxin-Pn1a (100 aa).

Residues 1–28 (MKYRIFKMKYTLLFLSVIALVHIFAVEA) form the signal peptide. Positions 29–41 (KDEPESDALVPQE) are excised as a propeptide. Cystine bridges form between Cys44–Cys58, Cys51–Cys64, Cys57–Cys82, Cys66–Cys80, and Cys90–Cys97.

The protein belongs to the neurotoxin 09 (Tx3-6) family. As to expression, expressed by the venom gland.

The protein resides in the secreted. In terms of biological role, probable neurotoxin. This chain is U12-ctenitoxin-Pn1a, found in Phoneutria nigriventer (Brazilian armed spider).